Here is a 206-residue protein sequence, read N- to C-terminus: mRNA-decapping protein D9 (206 aa).

One can recognise a Nudix hydrolase domain in the interval 23–206 (KKTHVFAICV…FIYNTLLYSK (184 aa)). A Nudix box motif is present at residues 104 to 125 (GKLNKSETIDDCIRREIKEETD). Mg(2+) is bound at residue glutamate 110. Glutamate 119 acts as the Nucleophile in catalysis. Glutamate 123 and aspartate 144 together coordinate Mg(2+).

Belongs to the Nudix hydrolase family. It depends on Mg(2+) as a cofactor. Mn(2+) is required as a cofactor.

In terms of biological role, decapping enzyme required for the removal of the 5'-end m7GpppN cap tethered to viral and host mRNAs to allow their decay in cells. May therefore accelerate viral and cellular mRNA turnover to eliminate competing host mRNAs and allow stage-specific synthesis of viral proteins. Acceleration of the turnover of cellular transcripts may even promote the shutoff of host protein synthesis. Does not cleave unmethylated RNAs or RNAs shorter than 24 nucleotides. In Oryctolagus cuniculus (Rabbit), this protein is mRNA-decapping protein D9.